The primary structure comprises 580 residues: Bifunctional lycopene cyclase/phytoene synthase (580 aa).

Helical transmembrane passes span 3–23 (WEYA…LAAV), 35–55 (KLVF…SYLI), and 65–85 (GVVV…FFVI). N-linked (GlcNAc...) asparagine glycosylation occurs at asparagine 89. 4 helical membrane passes run 116–136 (IAGQ…VSSG), 139–159 (GMYM…LWSI), 171–191 (NTAL…TFAL), and 214–234 (IEEA…LIAC).

This sequence in the N-terminal section; belongs to the lycopene beta-cyclase family. In the C-terminal section; belongs to the phytoene/squalene synthase family.

The protein resides in the membrane. The catalysed reaction is all-trans-lycopene = gamma-carotene. It carries out the reaction gamma-carotene = all-trans-beta-carotene. The enzyme catalyses 2 (2E,6E,10E)-geranylgeranyl diphosphate = 15-cis-phytoene + 2 diphosphate. Its pathway is carotenoid biosynthesis; beta-carotene biosynthesis. It functions in the pathway carotenoid biosynthesis; phytoene biosynthesis; all-trans-phytoene from geranylgeranyl diphosphate: step 1/1. In terms of biological role, bifunctional enzyme; part of the car gene cluster that mediates the biosynthesis of neurosporaxanthin, a carboxylic apocarotenoid acting as an essential protective pigments and leading to orange pigmentation. CarAR catalyzes the first step of the pathway by converting geranylgeranyl diphosphate to phytoene, as well as the later cyclization step that transforms the carB product lycopene into gamma-carotene. CarAR also converts part of gamma-carotene into beta-carotene. Neurosporaxanthin is synthesized from geranyl-geranyl pyrophosphate (GGPP) through several enzymatic activities. Phytoene synthase activity performed by the bifunctional enzyme carAR first produces phytoene from geranyl-geranyl pyrophosphate (GGPP). The phytoene dehydrogenase carB then introduces 4 desaturations to lead to lycopene which is substrate of the carotene cyclase activity of carAR that leads to the production of gamma-carotene. CarB then performs a 5th desaturation reaction to yield torulene. Torulene is the substrate of the dioxidase carT that breaks the molecule, removing five carbon atoms to yield beta-apo-4'-carotenal, whereas the aldehyde dehydrogenase carD mediates the last step by converting beta-apo-4'-carotenal into neurosporaxanthin. This is Bifunctional lycopene cyclase/phytoene synthase from Gibberella fujikuroi (strain CBS 195.34 / IMI 58289 / NRRL A-6831) (Bakanae and foot rot disease fungus).